The primary structure comprises 322 residues: tRNA (guanine-N(7)-)-methyltransferase (322 aa).

S-adenosyl-L-methionine-binding residues include glutamate 29, glutamate 55, and aspartate 105. Aspartate 105 is a catalytic residue. The substrate site is built by lysine 109 and aspartate 141.

The protein belongs to the class I-like SAM-binding methyltransferase superfamily. TrmB family.

The catalysed reaction is guanosine(46) in tRNA + S-adenosyl-L-methionine = N(7)-methylguanosine(46) in tRNA + S-adenosyl-L-homocysteine. It functions in the pathway tRNA modification; N(7)-methylguanine-tRNA biosynthesis. Functionally, catalyzes the formation of N(7)-methylguanine at position 46 (m7G46) in tRNA. The chain is tRNA (guanine-N(7)-)-methyltransferase from Deinococcus radiodurans (strain ATCC 13939 / DSM 20539 / JCM 16871 / CCUG 27074 / LMG 4051 / NBRC 15346 / NCIMB 9279 / VKM B-1422 / R1).